The sequence spans 128 residues: MWKFASIVVLVVCLAWAVYCEDQRPPSLKTRFGRSADEPESDNYVSNDIMEKRSAQRPPSLKTRFGRSEGAEVMEKRSAQRPPSLKTRFGRSVANPESDGYMRKRSAESEPFVTRIRHGRANKKRAAN.

Positions 1-22 are cleaved as a signal peptide; it reads MWKFASIVVLVVCLAWAVYCED. Position 23 is a pyrrolidone carboxylic acid (glutamine 23). The residue at position 26 (proline 26) is a Hydroxyproline; partial. Residues 27–128 are disordered; that stretch reads SLKTRFGRSA…GRANKKRAAN (102 aa). Phenylalanine amide is present on phenylalanine 32. A propeptide spanning residues 35–55 is cleaved from the precursor; sequence SADEPESDNYVSNDIMEKRSA. At glutamine 56 the chain carries Pyrrolidone carboxylic acid. Residue proline 59 is modified to Hydroxyproline; partial. Position 65 is a phenylalanine amide (phenylalanine 65). Residues 66 to 78 are compositionally biased toward basic and acidic residues; sequence GRSEGAEVMEKRS. Residues 68 to 79 constitute a propeptide that is removed on maturation; that stretch reads SEGAEVMEKRSA. Glutamine 80 bears the Pyrrolidone carboxylic acid mark. Proline 83 carries the post-translational modification Hydroxyproline; partial. Phenylalanine 89 is modified (phenylalanine amide). A propeptide spanning residues 92–128 is cleaved from the precursor; the sequence is SVANPESDGYMRKRSAESEPFVTRIRHGRANKKRAAN. The segment covering 115-128 has biased composition (basic residues); the sequence is RIRHGRANKKRAAN.

It belongs to the NPY family. As to expression, expressed in the brain, terminal ganglion, and midgut of adults: numerous neurosecretory cells and midgut endocrine cells. Expression is dynamic depending on reproductive cycle.

The protein resides in the secreted. Has a role in inhibiting host-seeking behavior during a reproductive cycle. The polypeptide is Head peptide (Aedes aegypti (Yellowfever mosquito)).